Consider the following 326-residue polypeptide: Cyclin-dependent kinase 6 (326 aa).

Methionine 1 bears the N-acetylmethionine mark. A phosphotyrosine mark is found at tyrosine 13 and tyrosine 24. The region spanning 13–300 (YECVAEIGEG…AYSALSHPYF (288 aa)) is the Protein kinase domain. Residues 19-27 (IGEGAYGKV) and lysine 43 each bind ATP. A phosphothreonine mark is found at threonine 49 and threonine 70. The Proton acceptor role is filled by aspartate 145. Threonine 177 bears the Phosphothreonine mark. The residue at position 264 (lysine 264) is an N6-acetyllysine. A Phosphothreonine modification is found at threonine 325.

This sequence belongs to the protein kinase superfamily. CMGC Ser/Thr protein kinase family. CDC2/CDKX subfamily. In terms of assembly, interaction with D-type G1 cyclins. Cyclin binding promotes enzyme activation by phosphorylation at Thr-177. Binds to RUNX1, CDKN2D, FBXO7 and CDKN2C/p18-INK4c. Forms a cytoplasmic complex with Hsp90/HSP90AB1 and CDC37. FBXO7-binding promotes D-type cyclin binding. Interacts with Kaposi's sarcoma herpesvirus (KSHV) V-cyclin and herpesvirus saimiri (V-cyclin/ECLF2); the CDK6/V-cyclin complex phosphorylates NPM1 and thus lead to viral reactivation by reducing viral LANA levels. Post-translationally, thr-177 phosphorylation and Tyr-24 dephosphorylation promotes kinase activity. As to expression, expressed ubiquitously. Accumulates in squamous cell carcinomas, proliferating hematopoietic progenitor cells, beta-cells of pancreatic islets of Langerhans, and neuroblastomas. Reduced levels in differentiating cells.

It localises to the cytoplasm. The protein localises to the nucleus. It is found in the cell projection. Its subcellular location is the ruffle. The protein resides in the cytoskeleton. It localises to the microtubule organizing center. The protein localises to the centrosome. It catalyses the reaction L-seryl-[protein] + ATP = O-phospho-L-seryl-[protein] + ADP + H(+). The catalysed reaction is L-threonyl-[protein] + ATP = O-phospho-L-threonyl-[protein] + ADP + H(+). Inhibited by INK4 proteins (CDKN2C/p18-INK4c), aminopurvalanol, PD0332991, 4-(Pyrazol-4-yl)-pyrimidines and fisetin, a flavonol inhibitor. Activated by Thr-177 phosphorylation and Tyr-24 dephosphorylation. Stimulated by cyclin from herpesvirus saimiri (V-cyclin/ECLF2). Rapidly down-regulated prior to cell differentiation (e.g. erythroid and osteoblast). Serine/threonine-protein kinase involved in the control of the cell cycle and differentiation; promotes G1/S transition. Phosphorylates pRB/RB1 and NPM1. Interacts with D-type G1 cyclins during interphase at G1 to form a pRB/RB1 kinase and controls the entrance into the cell cycle. Involved in initiation and maintenance of cell cycle exit during cell differentiation; prevents cell proliferation and negatively regulates cell differentiation, but is required for the proliferation of specific cell types (e.g. erythroid and hematopoietic cells). Essential for cell proliferation within the dentate gyrus of the hippocampus and the subventricular zone of the lateral ventricles. Required during thymocyte development. Promotes the production of newborn neurons, probably by modulating G1 length. Promotes, at least in astrocytes, changes in patterns of gene expression, changes in the actin cytoskeleton including loss of stress fibers, and enhanced motility during cell differentiation. Prevents myeloid differentiation by interfering with RUNX1 and reducing its transcription transactivation activity, but promotes proliferation of normal myeloid progenitors. Delays senescence. Promotes the proliferation of beta-cells in pancreatic islets of Langerhans. May play a role in the centrosome organization during the cell cycle phases. This is Cyclin-dependent kinase 6 (CDK6) from Homo sapiens (Human).